The primary structure comprises 94 residues: MVLNYTMHMMYSKNWKAKKGLIRVTLDLDGNRIKDIHISGDFFMFPEDSINRLEDMLRGSSIEKINDIIRDFYNQGVITPGVEPEDFIQALRVI.

In terms of assembly, heterodimer composed of LplA and LplB.

The catalysed reaction is L-lysyl-[lipoyl-carrier protein] + (R)-lipoate + ATP = N(6)-[(R)-lipoyl]-L-lysyl-[lipoyl-carrier protein] + AMP + diphosphate + H(+). It functions in the pathway protein modification; protein lipoylation via exogenous pathway; protein N(6)-(lipoyl)lysine from lipoate: step 1/2. The protein operates within protein modification; protein lipoylation via exogenous pathway; protein N(6)-(lipoyl)lysine from lipoate: step 2/2. Part of a lipoate-protein ligase complex that catalyzes both the ATP-dependent activation of exogenously supplied lipoate to lipoyl-AMP and the transfer of the activated lipoyl onto the lipoyl domains of lipoate-dependent enzymes. Can also use octanoate as substrate. This is Lipoate-protein ligase A subunit 2 (lplB) from Thermoplasma acidophilum (strain ATCC 25905 / DSM 1728 / JCM 9062 / NBRC 15155 / AMRC-C165).